The chain runs to 248 residues: Homeobox-leucine zipper protein HOX15 (248 aa).

The disordered stretch occupies residues 1–44 (MAQDDEDVGLALGLSLGSGGHRRQRESRDEAPSSAAASLLTLRL). Positions 32 to 44 (PSSAAASLLTLRL) are enriched in low complexity. Residues 91 to 150 (NSRKKLRLSKEQSALLEDRFKEHSTLNPKQKVALAKQLNLRPRQVEVWFQNRRARTKLKQ) constitute a DNA-binding region (homeobox). The tract at residues 149–193 (KQTEVDCELLKRCCETLTEENRRLHRELQQLRALTHSTAAGFFMA) is leucine-zipper. The segment at 223–248 (PTAAADRTNKPTAPHLFSPFAKSAAC) is disordered.

The protein belongs to the HD-ZIP homeobox family. Class II subfamily. As to expression, expressed in seedlings, stems, leaf blades and panicles.

It is found in the nucleus. Its function is as follows. Probable transcription factor. The protein is Homeobox-leucine zipper protein HOX15 (HOX15) of Oryza sativa subsp. indica (Rice).